A 195-amino-acid chain; its full sequence is GTP-dependent dephospho-CoA kinase (195 aa).

The GTP site is built by Asp49, Val50, Asp68, Glu127, and Asp150.

It belongs to the GTP-dependent DPCK family.

The catalysed reaction is 3'-dephospho-CoA + GTP = GDP + CoA + H(+). It participates in cofactor biosynthesis; coenzyme A biosynthesis. In terms of biological role, catalyzes the GTP-dependent phosphorylation of the 3'-hydroxyl group of dephosphocoenzyme A to form coenzyme A (CoA). This chain is GTP-dependent dephospho-CoA kinase, found in Methanosarcina mazei (strain ATCC BAA-159 / DSM 3647 / Goe1 / Go1 / JCM 11833 / OCM 88) (Methanosarcina frisia).